Here is a 443-residue protein sequence, read N- to C-terminus: Histone deacetylase 10, chloroplastic (443 aa).

A chloroplast-targeting transit peptide spans 1 to 65; sequence MEQLWVPSLP…PSHNGTSISD (65 aa). Residues 82–412 form a histone deacetylase region; the sequence is DAHILYCTSP…FRAFLGEPSL (331 aa). Residue histidine 222 is the Proton donor/acceptor of the active site. The Zn(2+) site is built by aspartate 259, histidine 261, and aspartate 346.

The protein belongs to the histone deacetylase family. It depends on Zn(2+) as a cofactor. As to expression, expressed in leaves. Expressed in coleoptiles, leaves, flag leaves and flowers. Expressed at low levels in roots.

It is found in the plastid. Its subcellular location is the chloroplast. The protein localises to the mitochondrion. The catalysed reaction is N-acetylserotonin + H2O = serotonin + acetate. It carries out the reaction N-acetyltyramine + H2O = tyramine + acetate. The enzyme catalyses N-acetyltryptamine + H2O = tryptamine + acetate. It catalyses the reaction melatonin + H2O = 5-methoxytryptamine + acetate. The activity of this enzyme is not inhibited by butyrate, a well-known histone deacetylase inhibitor. In terms of biological role, involved in the regulation of melatonin biosynthesis by catalyzing the deacetylation of N-acetylserotonin to produce serotonin. N-acetylserotonin is methylated by acetylserotonin O-methyltransferase (ASMT) to produce melatonin (N-acetyl-5-methoxytryptamine). Deacetylates melatonin to produce 5-methoxytryptamine. In vitro, deacetylates N-acetyltyramine and N-acetyltryptamine to produce tyramine and tryptamine, respectively. The chain is Histone deacetylase 10, chloroplastic from Oryza sativa subsp. japonica (Rice).